A 112-amino-acid polypeptide reads, in one-letter code: Histone H2A, sperm (112 aa).

Glutamine 91 bears the N5-methylglutamine mark. Lysine 106 is covalently cross-linked (Glycyl lysine isopeptide (Lys-Gly) (interchain with G-Cter in ubiquitin)).

This sequence belongs to the histone H2A family. The nucleosome is a histone octamer containing two molecules each of H2A, H2B, H3 and H4 assembled in one H3-H4 heterotetramer and two H2A-H2B heterodimers. The octamer wraps approximately 147 bp of DNA. Monoubiquitination gives a specific tag for epigenetic transcriptional repression.

The protein localises to the nucleus. It is found in the chromosome. Its function is as follows. Core component of nucleosome. Nucleosomes wrap and compact DNA into chromatin, limiting DNA accessibility to the cellular machineries which require DNA as a template. Histones thereby play a central role in transcription regulation, DNA repair, DNA replication and chromosomal stability. DNA accessibility is regulated via a complex set of post-translational modifications of histones, also called histone code, and nucleosome remodeling. This is Histone H2A, sperm from Lytechinus pictus (Painted sea urchin).